The chain runs to 123 residues: Small ribosomal subunit protein uS12cz/uS12cy (123 aa).

This sequence belongs to the universal ribosomal protein uS12 family. Part of the 30S ribosomal subunit.

It localises to the plastid. It is found in the chloroplast. With S4 and S5 plays an important role in translational accuracy. Located at the interface of the 30S and 50S subunits. This chain is Small ribosomal subunit protein uS12cz/uS12cy (rps12-A), found in Citrus sinensis (Sweet orange).